The primary structure comprises 397 residues: Methyltransferase/ribosomally synthesized type I borosin cyclic peptide precursor mroMa1 (397 aa).

The tract at residues 1 to 246 (MALKKPGSLT…TTSTFYVPPR (246 aa)) is methyltransferase domain. Catalysis depends on residues R70, Y74, and Y96. Y96, H98, V101, A128, Q170, G208, S239, and T240 together coordinate S-adenosyl-L-methionine. Residues 247 to 365 (TPAPIDPKAV…GPIFVVMRQL (119 aa)) are clasp domain. The tract at residues 366–388 (PSAIASGQEPSQEEIARADDATA) is precursor leader. I391 and I392 each carry N-methylisoleucine. Residue Y393 is modified to N-methyltyrosine. I394 bears the N-methylisoleucine mark. V395 is subject to N-methylvaline.

This sequence in the N-terminal section; belongs to the precorrin methyltransferase family. As to quaternary structure, homodimer. MroMA automethylates at Ile-391, Ile-392, Tyr-393, Ile-394 and Val-395 before being processed by the a prolyloligopeptidase which likely forms a peptidyl ester upon removal of the follower propeptide, which then undergoes macrocyclization with the N-terminus of the modified core peptide. Peptide backbone alpha-N-methylations change the physicochemical properties of amide bonds to provide structural constraints and other favorable characteristics including biological membrane permeability to peptides.

Its pathway is secondary metabolite biosynthesis. Fusion protein of the methyltransferase mroM1 and a type I borosin core peptide; part of the gene cluster that mediates the biosynthesis of a type I borosin, a highly methylated cyclic peptide with potent biological activities. Type I borosins derive from the C-terminus of the fusion protein, and it is the same protein that methylates its own C-terminus using S-adenosyl methionine (SAM). The C-terminus is subsequently cleaved off and macrocyclized by a prolyloligopeptidase to give the final product. The protein is Methyltransferase/ribosomally synthesized type I borosin cyclic peptide precursor mroMa1 of Mycena rosella (Pink bonnet).